Here is a 478-residue protein sequence, read N- to C-terminus: Cobyric acid synthase (478 aa).

One can recognise a GATase cobBQ-type domain in the interval Gln250–His437. Cys331 (nucleophile) is an active-site residue. The active site involves His429.

The protein belongs to the CobB/CobQ family. CobQ subfamily.

The protein operates within cofactor biosynthesis; adenosylcobalamin biosynthesis. Functionally, catalyzes amidations at positions B, D, E, and G on adenosylcobyrinic A,C-diamide. NH(2) groups are provided by glutamine, and one molecule of ATP is hydrogenolyzed for each amidation. The polypeptide is Cobyric acid synthase (Xanthomonas euvesicatoria pv. vesicatoria (strain 85-10) (Xanthomonas campestris pv. vesicatoria)).